A 63-amino-acid polypeptide reads, in one-letter code: Actiflagelin (63 aa).

Cystine bridges form between C3-C24, C6-C11, C17-C39, C43-C55, and C56-C61. Residue P63 is modified to Proline amide.

Contains 5 disulfide bonds. As to expression, expressed by the venom gland.

It is found in the secreted. In terms of biological role, unknown. In vitro, this toxin activates sperm motility when tested on OF1 male mice. The polypeptide is Actiflagelin (Walterinnesia aegyptia (Desert black snake)).